We begin with the raw amino-acid sequence, 393 residues long: Cysteine protease ATG4B (393 aa).

Met-1 is subject to N-acetylmethionine. Position 34 is a phosphoserine (Ser-34). The Nucleophile role is filled by Cys-74. Residue Cys-189 is modified to S-nitrosocysteine. Residues Asp-278 and His-280 contribute to the active site. S-nitrosocysteine occurs at positions 292 and 301. A disulfide bond links Cys-292 and Cys-361. Phosphoserine is present on residues Ser-316 and Ser-383. The LIR motif lies at 388 to 391 (FEIL). A Phosphoserine modification is found at Ser-392.

This sequence belongs to the peptidase C54 family. As to quaternary structure, interacts with PFKP; promoting phosphorylation of ATG4B at Ser-34. Interacts with GBP7. Phosphorylation at Ser-383 and Ser-392 promotes autophagy by increasing protein delipidation activity without affecting proteolytic activation of ATG8 proteins. Phosphorylation at Ser-316 by ULK1 inhibits autophagy by decreasing both proteolytic activation and delipidation activities. Phosphorylation at Ser-316 is dephosphorylated by protein phosphatase 2A (PP2A). Phosphorylation at Ser-34 by AKT2 promotes its hydrolase activity, leading to increased proteolytic activation and delipidation of ATG8 family proteins. Phosphorylation at Ser-34 by AKT1 promotes mitochondrial localization and inhibition of the F1F0-ATP synthase activity, leading to elevation of mitochondrial reactive oxygen species (ROS). In terms of processing, ubiquitinated by RNF5, leading to its degradation by the proteasome. Post-translationally, S-nitrosylation at Cys-189 and Cys-292 in response to high glucose decreases both proteolytic activation and delipidation activities. O-glycosylated by OGT, leading to increase protease activity, thereby promoting the proteolytic activation of ATG8 family proteins. In terms of processing, forms reversible intrachain disulfide bonds in response to oxidative stress. Forms interchain disulfide bonds, leading to formation of homooligomers in response to oxidation.

It localises to the cytoplasm. The protein resides in the cytosol. It is found in the cytoplasmic vesicle. The protein localises to the autophagosome. Its subcellular location is the endoplasmic reticulum. It localises to the mitochondrion. It catalyses the reaction [protein]-C-terminal L-amino acid-glycyl-phosphatidylethanolamide + H2O = [protein]-C-terminal L-amino acid-glycine + a 1,2-diacyl-sn-glycero-3-phosphoethanolamine. The catalysed reaction is [protein]-C-terminal L-amino acid-glycyl-phosphatidylserine + H2O = [protein]-C-terminal L-amino acid-glycine + a 1,2-diacyl-sn-glycero-3-phospho-L-serine. Inhibited by N-ethylmaleimide. Redox-regulated during autophagy since reducing conditions activate ATG4A whereas an oxidizing environment such as the presence of H(2)O(2) inhibits its activity. The cysteine protease activity compounds is inhibited by styrylquinoline compounds 4-28 and LV-320. Its function is as follows. Cysteine protease that plays a key role in autophagy by mediating both proteolytic activation and delipidation of ATG8 family proteins. Required for canonical autophagy (macroautophagy), non-canonical autophagy as well as for mitophagy. The protease activity is required for proteolytic activation of ATG8 family proteins: cleaves the C-terminal amino acid of ATG8 proteins MAP1LC3A, MAP1LC3B, MAP1LC3C, GABARAPL1, GABARAPL2 and GABARAP, to reveal a C-terminal glycine. Exposure of the glycine at the C-terminus is essential for ATG8 proteins conjugation to phosphatidylethanolamine (PE) and insertion to membranes, which is necessary for autophagy. Protease activity is also required to counteract formation of high-molecular weight conjugates of ATG8 proteins (ATG8ylation): acts as a deubiquitinating-like enzyme that removes ATG8 conjugated to other proteins, such as ATG3. In addition to the protease activity, also mediates delipidation of ATG8 family proteins. Catalyzes delipidation of PE-conjugated forms of ATG8 proteins during macroautophagy. Also involved in non-canonical autophagy, a parallel pathway involving conjugation of ATG8 proteins to single membranes at endolysosomal compartments, by catalyzing delipidation of ATG8 proteins conjugated to phosphatidylserine (PS). Compared to other members of the family (ATG4A, ATG4C or ATG4C), constitutes the major protein for proteolytic activation of ATG8 proteins, while it displays weaker delipidation activity than other ATG4 paralogs. Involved in phagophore growth during mitophagy independently of its protease activity and of ATG8 proteins: acts by regulating ATG9A trafficking to mitochondria and promoting phagophore-endoplasmic reticulum contacts during the lipid transfer phase of mitophagy. In terms of biological role, (Microbial infection) Mediates cleavage of an ATG8 protein homolog coded in the genome of cytopathogenic bovine viral diarrhea virus (BVDV). This is Cysteine protease ATG4B (ATG4B) from Bos taurus (Bovine).